Consider the following 193-residue polypeptide: Ion-translocating oxidoreductase complex subunit A (193 aa).

The next 6 helical transmembrane spans lie at 5–25, 39–59, 72–92, 102–122, 134–154, and 171–191; these read LLLL…FLGL, IGMS…SYLV, LTTM…EMVV, LLGI…VALL, IIYG…FSAM, and AIAM…TGLV.

The protein belongs to the NqrDE/RnfAE family. The complex is composed of six subunits: RnfA, RnfB, RnfC, RnfD, RnfE and RnfG.

It localises to the cell inner membrane. In terms of biological role, part of a membrane-bound complex that couples electron transfer with translocation of ions across the membrane. The chain is Ion-translocating oxidoreductase complex subunit A from Colwellia psychrerythraea (strain 34H / ATCC BAA-681) (Vibrio psychroerythus).